Consider the following 101-residue polypeptide: Large ribosomal subunit protein eL30 (101 aa).

This sequence belongs to the eukaryotic ribosomal protein eL30 family.

This is Large ribosomal subunit protein eL30 from Pyrobaculum neutrophilum (strain DSM 2338 / JCM 9278 / NBRC 100436 / V24Sta) (Thermoproteus neutrophilus).